The primary structure comprises 437 residues: MPVIDESTMTYAEACRYFPGGVNSPIRACLPVRIVPPIVSSACRDIFIDSFGNNFIDFCGSWGSLIHGHSHPKILDAICNAASHGTSYGLTSENEISLASTLFSCLDLEDYKLRFVSSGTEATMTAVRLACGVTKCSIIVKFLGCYHGHADVLLKGISVDENNLQNVAHIVDTYFAGQPCLPLTLILPYNDVMIFEEVMHQIGERVACVIFEPICINMGVILPKHGFIESILAMCRRYSALSIMDEVVTGFRMGIRGMRSIMDVTADITVYGKILGGGMPVAALLAHQNIMDHLLPLGTVFQAGTLSGNPVAMAAGKASIELCCEPNFYSKLENLTEGFLSPIEEIIRSKGFPVSLVRSGSMFSFFFRDTPPANLSEVQQCDQERFGLFYRQAFSLGVYLSPASTEASFISSVHSRENLAYTQNVLIDSLVKSFDNV.

Lys-273 is modified (N6-(pyridoxal phosphate)lysine).

Belongs to the class-III pyridoxal-phosphate-dependent aminotransferase family. HemL subfamily. As to quaternary structure, homodimer. Pyridoxal 5'-phosphate serves as cofactor.

The protein localises to the cytoplasm. It carries out the reaction (S)-4-amino-5-oxopentanoate = 5-aminolevulinate. It participates in porphyrin-containing compound metabolism; protoporphyrin-IX biosynthesis; 5-aminolevulinate from L-glutamyl-tRNA(Glu): step 2/2. This is Glutamate-1-semialdehyde 2,1-aminomutase from Chlamydia felis (strain Fe/C-56) (Chlamydophila felis).